Reading from the N-terminus, the 405-residue chain is CRS2-associated factor 1, mitochondrial (405 aa).

Residues 1 to 20 (MFLIRLSRHNPSSFTLLTRR) constitute a mitochondrion transit peptide. The segment at 32–75 (RDLYNFQSPPPLSSSASENPDFNQKNNNKKKPKPQYRPPSSLEG) is disordered. CRM domains follow at residues 157-255 (ASLT…KRPK) and 277-373 (DGLS…KEDD). The segment at 384-405 (SIDSDVDLSCSRGAQDSPDETT) is disordered.

As to quaternary structure, part of large ribonucleo-protein complexes that include group IIB introns.

The protein resides in the mitochondrion. In terms of biological role, may be involved in the splicing of group IIB introns in mitochondria. The polypeptide is CRS2-associated factor 1, mitochondrial (Arabidopsis thaliana (Mouse-ear cress)).